The following is a 469-amino-acid chain: Cytoplasmic tRNA 2-thiolation protein 2 (469 aa).

It belongs to the CTU2/NCS2 family.

It localises to the cytoplasm. The protein operates within tRNA modification; 5-methoxycarbonylmethyl-2-thiouridine-tRNA biosynthesis. In terms of biological role, plays a central role in 2-thiolation of mcm(5)S(2)U at tRNA wobble positions of tRNA(Lys), tRNA(Glu) and tRNA(Gln). May act by forming a heterodimer with NCS6 that ligates sulfur from thiocarboxylated URM1 onto the uridine of tRNAs at wobble position. Prior mcm(5) tRNA modification by the elongator complex is required for 2-thiolation. May also be involved in protein urmylation. This is Cytoplasmic tRNA 2-thiolation protein 2 from Candida glabrata (strain ATCC 2001 / BCRC 20586 / JCM 3761 / NBRC 0622 / NRRL Y-65 / CBS 138) (Yeast).